Reading from the N-terminus, the 261-residue chain is Cytochrome c oxidase subunit 3 (261 aa).

Residues 1–15 (MTHQTHAYHMVNPSP) are Mitochondrial matrix-facing. Residues 16-34 (WPLTGALSALLMTSGLIMW) form a helical membrane-spanning segment. The Mitochondrial intermembrane portion of the chain corresponds to 35 to 40 (FHFNST). The chain crosses the membrane as a helical span at residues 41–66 (TLLMLGLTTNMLTMYQWWRDVIREST). The Mitochondrial matrix portion of the chain corresponds to 67–72 (FQGHHT). The chain crosses the membrane as a helical span at residues 73–105 (PNVQKGLRYGMILFIISEVLFFTGFFWAFYHSS). Topologically, residues 106-128 (LAPTPELGGCWPPTGINPLNPLE) are mitochondrial intermembrane. The chain crosses the membrane as a helical span at residues 129-152 (VPLLNTSVLLASGVSITWAHHSLM). Topologically, residues 153 to 155 (EGN) are mitochondrial matrix. The helical transmembrane segment at 156–183 (RNHMLQALFITIALGVYFTLLQASEYYE) threads the bilayer. At 184–190 (APFTISD) the chain is on the mitochondrial intermembrane side. Residues 191–223 (GVYGSTFFVATGFHGLHVIIGSTFLIVCFFRQL) form a helical membrane-spanning segment. Over 224–232 (KFHFTSNHH) the chain is Mitochondrial matrix. A helical transmembrane segment spans residues 233–256 (FGFEAAAWYWHFVDVVWLFLYVSI). Topologically, residues 257–261 (YWWGS) are mitochondrial intermembrane.

This sequence belongs to the cytochrome c oxidase subunit 3 family. As to quaternary structure, component of the cytochrome c oxidase (complex IV, CIV), a multisubunit enzyme composed of 14 subunits. The complex is composed of a catalytic core of 3 subunits MT-CO1, MT-CO2 and MT-CO3, encoded in the mitochondrial DNA, and 11 supernumerary subunits COX4I, COX5A, COX5B, COX6A, COX6B, COX6C, COX7A, COX7B, COX7C, COX8 and NDUFA4, which are encoded in the nuclear genome. The complex exists as a monomer or a dimer and forms supercomplexes (SCs) in the inner mitochondrial membrane with NADH-ubiquinone oxidoreductase (complex I, CI) and ubiquinol-cytochrome c oxidoreductase (cytochrome b-c1 complex, complex III, CIII), resulting in different assemblies (supercomplex SCI(1)III(2)IV(1) and megacomplex MCI(2)III(2)IV(2)).

The protein localises to the mitochondrion inner membrane. The enzyme catalyses 4 Fe(II)-[cytochrome c] + O2 + 8 H(+)(in) = 4 Fe(III)-[cytochrome c] + 2 H2O + 4 H(+)(out). In terms of biological role, component of the cytochrome c oxidase, the last enzyme in the mitochondrial electron transport chain which drives oxidative phosphorylation. The respiratory chain contains 3 multisubunit complexes succinate dehydrogenase (complex II, CII), ubiquinol-cytochrome c oxidoreductase (cytochrome b-c1 complex, complex III, CIII) and cytochrome c oxidase (complex IV, CIV), that cooperate to transfer electrons derived from NADH and succinate to molecular oxygen, creating an electrochemical gradient over the inner membrane that drives transmembrane transport and the ATP synthase. Cytochrome c oxidase is the component of the respiratory chain that catalyzes the reduction of oxygen to water. Electrons originating from reduced cytochrome c in the intermembrane space (IMS) are transferred via the dinuclear copper A center (CU(A)) of subunit 2 and heme A of subunit 1 to the active site in subunit 1, a binuclear center (BNC) formed by heme A3 and copper B (CU(B)). The BNC reduces molecular oxygen to 2 water molecules using 4 electrons from cytochrome c in the IMS and 4 protons from the mitochondrial matrix. The protein is Cytochrome c oxidase subunit 3 (MT-CO3) of Gazella subgutturosa (Goitred gazelle).